A 129-amino-acid chain; its full sequence is Large-conductance mechanosensitive channel (129 aa).

The next 2 helical transmembrane spans lie at 10–30 and 70–90; these read FAVK…GAFG and AVML…VIAI.

This sequence belongs to the MscL family. As to quaternary structure, homopentamer.

The protein resides in the cell inner membrane. In terms of biological role, channel that opens in response to stretch forces in the membrane lipid bilayer. May participate in the regulation of osmotic pressure changes within the cell. This is Large-conductance mechanosensitive channel from Actinobacillus pleuropneumoniae serotype 3 (strain JL03).